We begin with the raw amino-acid sequence, 151 residues long: Putative pre-16S rRNA nuclease (151 aa).

Belongs to the YqgF nuclease family.

The protein resides in the cytoplasm. Its function is as follows. Could be a nuclease involved in processing of the 5'-end of pre-16S rRNA. This chain is Putative pre-16S rRNA nuclease, found in Prochlorococcus marinus subsp. pastoris (strain CCMP1986 / NIES-2087 / MED4).